The primary structure comprises 324 residues: S-methyl-5'-thioadenosine phosphorylase (324 aa).

Phosphate is bound by residues Ser14, 57 to 58 (RH), and 90 to 91 (SA). Met196 is a substrate binding site. Position 197 (Ser197) interacts with phosphate. Substrate is bound at residue 220-222 (DYD).

This sequence belongs to the PNP/MTAP phosphorylase family. MTAP subfamily. As to quaternary structure, homotrimer.

It localises to the cytoplasm. The protein resides in the nucleus. The catalysed reaction is S-methyl-5'-thioadenosine + phosphate = 5-(methylsulfanyl)-alpha-D-ribose 1-phosphate + adenine. The protein operates within amino-acid biosynthesis; L-methionine biosynthesis via salvage pathway; S-methyl-5-thio-alpha-D-ribose 1-phosphate from S-methyl-5'-thioadenosine (phosphorylase route): step 1/1. In terms of biological role, catalyzes the reversible phosphorylation of S-methyl-5'-thioadenosine (MTA) to adenine and 5-methylthioribose-1-phosphate. Involved in the breakdown of MTA, a major by-product of polyamine biosynthesis. Responsible for the first step in the methionine salvage pathway after MTA has been generated from S-adenosylmethionine. Has broad substrate specificity with 6-aminopurine nucleosides as preferred substrates. The chain is S-methyl-5'-thioadenosine phosphorylase from Coprinopsis cinerea (strain Okayama-7 / 130 / ATCC MYA-4618 / FGSC 9003) (Inky cap fungus).